The primary structure comprises 414 residues: Gamma-glutamyl phosphate reductase (414 aa).

This sequence belongs to the gamma-glutamyl phosphate reductase family.

The protein resides in the cytoplasm. It catalyses the reaction L-glutamate 5-semialdehyde + phosphate + NADP(+) = L-glutamyl 5-phosphate + NADPH + H(+). It functions in the pathway amino-acid biosynthesis; L-proline biosynthesis; L-glutamate 5-semialdehyde from L-glutamate: step 2/2. In terms of biological role, catalyzes the NADPH-dependent reduction of L-glutamate 5-phosphate into L-glutamate 5-semialdehyde and phosphate. The product spontaneously undergoes cyclization to form 1-pyrroline-5-carboxylate. This is Gamma-glutamyl phosphate reductase from Clostridium botulinum (strain Eklund 17B / Type B).